A 432-amino-acid polypeptide reads, in one-letter code: Adenosylhomocysteinase (432 aa).

S2 is modified (N-acetylserine). Substrate contacts are provided by T57, D131, and E156. S183 carries the post-translational modification Phosphoserine. Positions 183–350 (SVTKSKFDNL…EGRLVNLGCA (168 aa)) are NAD binding. Substrate is bound by residues K186 and D190. K186 is subject to N6-(2-hydroxyisobutyryl)lysine. Y193 bears the Phosphotyrosine mark.

It belongs to the adenosylhomocysteinase family. In terms of assembly, homotetramer. Interaction with AHCYL1. NAD(+) is required as a cofactor.

It localises to the cytoplasm. Its subcellular location is the melanosome. The protein localises to the nucleus. The protein resides in the endoplasmic reticulum. It carries out the reaction S-adenosyl-L-homocysteine + H2O = L-homocysteine + adenosine. Its pathway is amino-acid biosynthesis; L-homocysteine biosynthesis; L-homocysteine from S-adenosyl-L-homocysteine: step 1/1. Catalyzes the hydrolysis of S-adenosyl-L-homocysteine to form adenosine and homocysteine. Binds copper ions. The sequence is that of Adenosylhomocysteinase (AHCY) from Sus scrofa (Pig).